The following is a 772-amino-acid chain: Cellulosomal-scaffolding protein B (772 aa).

A Cohesin 1 domain is found at 1–80; that stretch reads DPSKSFDSAI…TTFVAGGVNL (80 aa). The segment at 81–93 is linker (Pro/Thr-rich); that stretch reads GSSVPTTQPNVPS. In terms of domain architecture, Cohesin 2 spans 94–240; that stretch reads DGVVVEIGKV…VNVGNATPTK (147 aa). Residues 235 to 276 show a composition bias toward low complexity; it reads NATPTKGATPTNTATPTKSATATPPGHSVPTNTPTNTPANTP. Disordered regions lie at residues 235 to 277 and 438 to 464; these read NATP…NTPV and VVPSTQPVTTPPATTKPPATTIPPSDD. The tract at residues 241–272 is linker (Pro/Thr-rich); that stretch reads GATPTNTATPTKSATATPPGHSVPTNTPTNTP. The CBM3 domain maps to 277–435; sequence VSGNLKVEFY…GVLVWGKEPG (159 aa). Over residues 438 to 461 the composition is skewed to low complexity; sequence VVPSTQPVTTPPATTKPPATTIPP. The interval 440 to 461 is linker (Pro/Thr-rich); sequence PSTQPVTTPPATTKPPATTIPP. The 146-residue stretch at 462–607 folds into the Cohesin 3 domain; that stretch reads SDDPNAIKIK…ETDLINGGVL (146 aa). In terms of domain architecture, Dockerin spans 704 to 771; sequence IMMWVGDIVK…FGATSSDYDA (68 aa).

Post-translationally, O-glycosylated on most but not all Thr residues of the linker units.

It localises to the secreted. Acts as a scaffolding protein in the cellulosome. It promotes binding of cellulose to the catalytic domains of the cellulolytic enzymes probably through the binding of the nine repeated domains with dockerin domains present in catalytic subunits of the cellulosome. This Acetivibrio thermocellus (Hungateiclostridium thermocellum) protein is Cellulosomal-scaffolding protein B (cipB).